The primary structure comprises 983 residues: Ephrin type-A receptor 3 (983 aa).

An N-terminal signal peptide occupies residues 1-19 (MDRRRLPLLLLCAALGSAG). At 20-540 (RLSARPGNEV…SFSISSENSQ (521 aa)) the chain is on the extracellular side. Positions 28-206 (EVNLLDSKTI…YFKKCPFTVK (179 aa)) constitute an Eph LBD domain. 5 N-linked (GlcNAc...) asparagine glycosylation sites follow: Asn231, Asn336, Asn390, Asn403, and Asn492. Fibronectin type-III domains follow at residues 324–434 (PPSA…TNQA) and 435–530 (APSP…TSPD). The helical transmembrane segment at 541-564 (VVMIAISAAVAIILLTVVVYVLIG) threads the bilayer. The Cytoplasmic portion of the chain corresponds to 565 to 983 (RFCGYKKSKH…THTKNSPVPV (419 aa)). Tyr596 and Tyr602 each carry phosphotyrosine; by autocatalysis. A Protein kinase domain is found at 621-882 (ISIDKVVGAG…QIVSILDKLI (262 aa)). ATP-binding positions include 628–633 (GAGEFG), Lys653, and 700–706 (EYMENGS). Tyr701 carries the phosphotyrosine; by autocatalysis modification. Asp746 serves as the catalytic Proton acceptor. 750–751 (RN) contributes to the ATP binding site. Phosphotyrosine; by autocatalysis is present on Tyr779. Residues 911–975 (SAFRTAGDWL…VSSIKTLETH (65 aa)) enclose the SAM domain. The PDZ-binding signature appears at 981-983 (VPV).

The protein belongs to the protein kinase superfamily. Tyr protein kinase family. Ephrin receptor subfamily. In terms of assembly, heterotetramer upon binding of the ligand. The heterotetramer is composed of an ephrin dimer and a receptor dimer. Oligomerization is probably required to induce biological responses. Post-translationally, autophosphorylates upon activation by EFNA5. Highly expressed in the developing brain and embryonic tissues. In adult, the greatest levels of expression occur in the brain. It is expressed in a graded manner across the retina with the highest expression at its temporal pole. Detectable in all other adult tissues examined, except the liver.

The protein localises to the cell membrane. It catalyses the reaction L-tyrosyl-[protein] + ATP = O-phospho-L-tyrosyl-[protein] + ADP + H(+). Functionally, receptor tyrosine kinase which binds promiscuously membrane-bound ephrin family ligands residing on adjacent cells, leading to contact-dependent bidirectional signaling into neighboring cells. The signaling pathway downstream of the receptor is referred to as forward signaling while the signaling pathway downstream of the ephrin ligand is referred to as reverse signaling. Highly promiscuous for ephrin-A ligands it binds preferentially EFNA5. Upon activation by EFNA5 regulates cell-cell adhesion, cytoskeletal organization and cell migration. Plays a role in cardiac cells migration and differentiation probably through activation by EFNA1. Involved in the retinotectal mapping of neurons. May also control the segregation but not the guidance of motor and sensory axons during neuromuscular circuit development. This chain is Ephrin type-A receptor 3 (EPHA3), found in Gallus gallus (Chicken).